The chain runs to 96 residues: Guanyl-specific ribonuclease Sa (96 aa).

Cysteines 7 and 96 form a disulfide. The Proton acceptor role is filled by glutamate 54. Histidine 85 functions as the Proton donor in the catalytic mechanism.

This sequence belongs to the ribonuclease N1/T1 family.

It is found in the secreted. It catalyses the reaction [RNA] containing guanosine + H2O = an [RNA fragment]-3'-guanosine-3'-phosphate + a 5'-hydroxy-ribonucleotide-3'-[RNA fragment].. This Kitasatospora aureofaciens (Streptomyces aureofaciens) protein is Guanyl-specific ribonuclease Sa (rnaSA).